Here is a 605-residue protein sequence, read N- to C-terminus: Phosphoenolpyruvate carboxykinase [GTP] (605 aa).

Substrate is bound by residues Arg79 and 218–220; that span reads YGG. Positions 227 and 247 each coordinate Mn(2+). Ser269 contacts substrate. Residue 270–275 coordinates GTP; sequence ACGKTN. Cys271 is an active-site residue. Asp294 contacts Mn(2+). Over residues 364–381 the composition is skewed to basic and acidic residues; that stretch reads LTDWKGRDWTPQSDEKAA. The tract at residues 364–385 is disordered; that stretch reads LTDWKGRDWTPQSDEKAAHPNS. 384–386 is a binding site for substrate; that stretch reads NSR. Residues Arg386, Arg417, and 513 to 516 contribute to the GTP site; that span reads FGEN.

It belongs to the phosphoenolpyruvate carboxykinase [GTP] family. Monomer. Requires Mn(2+) as cofactor.

The protein resides in the cytoplasm. It carries out the reaction oxaloacetate + GTP = phosphoenolpyruvate + GDP + CO2. Its pathway is carbohydrate biosynthesis; gluconeogenesis. Its function is as follows. Catalyzes the conversion of oxaloacetate (OAA) to phosphoenolpyruvate (PEP), the rate-limiting step in the metabolic pathway that produces glucose from lactate and other precursors derived from the citric acid cycle. In Saccharopolyspora erythraea (strain ATCC 11635 / DSM 40517 / JCM 4748 / NBRC 13426 / NCIMB 8594 / NRRL 2338), this protein is Phosphoenolpyruvate carboxykinase [GTP].